A 662-amino-acid chain; its full sequence is Carboxysome assembly protein CsoS2 (662 aa).

The interval 1-227 (MSTSNAQSGR…KRRNAKEAPQ (227 aa)) is N-terminal domain. 3 disordered regions span residues 1–258 (MSTS…SESG), 277–322 (NCDV…TCSA), and 342–419 (PAKS…RGSC). Residues 8 to 27 (SGRAAAIARRNAQVKGKGYT) form an N-repeat 1 repeat. Composition is skewed to low complexity over residues 28-57 (ASAA…SQPS) and 64-76 (SVAP…ASAA). One copy of the N-repeat 2 repeat lies at 58-72 (RSRRKVSVAPTATPA). Residues 120 to 135 (RQAKAEKPTKRSERRT) are compositionally biased toward basic and acidic residues. Polar residues predominate over residues 141–150 (VASQQPSGRL). Residues 147–168 (SGRLQSKAYRKAQAKGKAGQEA) form an N-repeat 3 repeat. Composition is skewed to low complexity over residues 161 to 170 (KGKAGQEAFK), 237 to 247 (GQSVSGTQVGQ), and 289 to 300 (VTQTQTTRGQVV). 5 M-repeat repeats span residues 228–278 (KVGE…SKNC), 288–338 (KVTQ…KMYC), 388–436 (KVMP…AKAC), 446–491 (KVTA…TEQF), and 496–550 (VDEQ…AMVC). Residues 228 to 559 (KVGESQTLHG…CDSTNAAAPG (332 aa)) form a middle region region. Residues 391–404 (PSQTAKGNTTTGSQ) are compositionally biased toward polar residues. A C-terminal domain region spans residues 560 to 631 (ESDFPAMIGQ…SPMGASQYRP (72 aa)). Residues 564 to 572 (PAMIGQAQP) form a C-repeat 1 repeat. Disordered regions lie at residues 588–607 (KITG…DGPW) and 619–662 (AGQS…GARA). The interval 632 to 662 (VNNEVPMSPITGSSGNTDTGAKVTLSGGARA) is C-terminal peptide. The segment covering 641–650 (ITGSSGNTDT) has biased composition (polar residues).

Belongs to the CsoS2 family. Interacts via its N-terminal repeats with RuBisCO. Interacts with the major shell protein CsoS1. Post-translationally, unlike H.neapolitanus and predictions for P.marinus strain MIT 9313, this protein is not thought to have ribosomal frameshifting.

Its subcellular location is the carboxysome. Its function is as follows. Required for alpha-carboxysome (Cb) assembly, mediates interaction between RuBisCO and the Cb shell. The protein is probably intrinsically disordered. The C-terminal repeats act as the encapsulation signal to target proteins to the Cb; they are necessary and sufficient to target both CsoS2 and foreign proteins to the Cb. The N-terminal repeats of this protein bind simultaneously to both subunits of RuBisCO. Probably also interacts with the major shell proteins (CsoS1); that interaction would increase the local concentration of CsoS2 so that it can condense RuBisCO and full carboxysomes can be formed. The chain is Carboxysome assembly protein CsoS2 from Hydrogenovibrio crunogenus (strain DSM 25203 / XCL-2) (Thiomicrospira crunogena).